The sequence spans 510 residues: Glycerol kinase (510 aa).

T14 lines the ADP pocket. Residues T14 and T15 each coordinate ATP. T14 contributes to the sn-glycerol 3-phosphate binding site. Residue R18 participates in ADP binding. Positions 84, 85, 136, and 256 each coordinate sn-glycerol 3-phosphate. Residues R84, E85, Y136, D256, and Q257 each coordinate glycerol. T278, G322, G422, and N426 together coordinate ADP. T278, G322, and G422 together coordinate ATP.

Belongs to the FGGY kinase family.

The enzyme catalyses glycerol + ATP = sn-glycerol 3-phosphate + ADP + H(+). It functions in the pathway polyol metabolism; glycerol degradation via glycerol kinase pathway; sn-glycerol 3-phosphate from glycerol: step 1/1. Functionally, key enzyme in the regulation of glycerol uptake and metabolism. Catalyzes the phosphorylation of glycerol to yield sn-glycerol 3-phosphate. It also catalyzes the phosphorylation of dihydroxyacetone (DHA). Involved, together with the DHA kinase DhaKLM, in the metabolism of DHA. The chain is Glycerol kinase from Haloferax volcanii (strain ATCC 29605 / DSM 3757 / JCM 8879 / NBRC 14742 / NCIMB 2012 / VKM B-1768 / DS2) (Halobacterium volcanii).